The primary structure comprises 258 residues: MSILLNKTRKLNTILQKSGTEPVIFDDICNILSEVLECNVYVVSRKGKILGNNFSSGFECEKLKKEIIPTKKFPDSYNLKLLDCKETKANLKHTEFCTFYENEKCEFENKVSTIVPIIGNRERLGTLVLARFTKKFTDDDLVLAEYSATIVGLEILRSKNDEIEAEARKRAVVQLAIGTLSYSELEAVEHIFNELDGNEGLLVASKIADKVGITRSVIVNALRKFESAGVIESRSLGMKGTHIKILNDRLLEGLKKIK.

The GAF domain stretch occupies residues 1–156 (MSILLNKTRK…SATIVGLEIL (156 aa)). The segment at residues 204-223 (ASKIADKVGITRSVIVNALR) is a DNA-binding region (H-T-H motif).

This sequence belongs to the CodY family.

It localises to the cytoplasm. In terms of biological role, DNA-binding global transcriptional regulator which is involved in the adaptive response to starvation and acts by directly or indirectly controlling the expression of numerous genes in response to nutrient availability. During rapid exponential growth, CodY is highly active and represses genes whose products allow adaptation to nutrient depletion. The sequence is that of Global transcriptional regulator CodY from Clostridium acetobutylicum (strain ATCC 824 / DSM 792 / JCM 1419 / IAM 19013 / LMG 5710 / NBRC 13948 / NRRL B-527 / VKM B-1787 / 2291 / W).